The sequence spans 338 residues: Large ribosomal subunit protein uL3 (338 aa).

Positions 1 to 37 (MPQPSRPRKGSMGFSPRKRAESEVPRIRSWASNDGAP) are disordered.

The protein belongs to the universal ribosomal protein uL3 family. Part of the 50S ribosomal subunit. Forms a cluster with proteins L14 and L24e.

Its function is as follows. One of the primary rRNA binding proteins, it binds directly near the 3'-end of the 23S rRNA, where it nucleates assembly of the 50S subunit. The polypeptide is Large ribosomal subunit protein uL3 (Haloquadratum walsbyi (strain DSM 16790 / HBSQ001)).